A 485-amino-acid polypeptide reads, in one-letter code: N-succinylglutamate 5-semialdehyde dehydrogenase (485 aa).

220-225 is a binding site for NAD(+); that stretch reads GSANTG. Active-site residues include glutamate 243 and cysteine 278.

This sequence belongs to the aldehyde dehydrogenase family. AstD subfamily.

It carries out the reaction N-succinyl-L-glutamate 5-semialdehyde + NAD(+) + H2O = N-succinyl-L-glutamate + NADH + 2 H(+). Its pathway is amino-acid degradation; L-arginine degradation via AST pathway; L-glutamate and succinate from L-arginine: step 4/5. Functionally, catalyzes the NAD-dependent reduction of succinylglutamate semialdehyde into succinylglutamate. This is N-succinylglutamate 5-semialdehyde dehydrogenase from Vibrio atlanticus (strain LGP32) (Vibrio splendidus (strain Mel32)).